Consider the following 384-residue polypeptide: MAKHLFTSESVSEGHPDKIADQISDAVLDAILQQDPKARVACETYVKTGMVLVGGEITTSAWVDIEEITRNTVREIGYVHSDMGFDANSCAVLSAIGKQSPDINQGVDRSDLLEQGAGDQGLMFGYATNETDVLMPAPITYAHRLVQRQAEVRKNGTLPWLRPDAKSQVTFQYDDGKIVGIDAVVLSTQHAEDIDQKSLQEAVMEEIIKPILPSEWLNTSTKFFINPTGRFVIGGPMGDCGLTGRKIIVDTYGGMARHGGGAFSGKDPSKVDRSAAYAARYVAKNIVAAGLADRCEIQVSYAIGVAEPTSIMVETFGTEKVPAEQLILLVREFFDLRPYGLIQMLDLLHPIYKETAAYGHFGRENFPWEKTDKAQLLRDAAGLK.

An ATP-binding site is contributed by H15. Residue D17 coordinates Mg(2+). Residue E43 coordinates K(+). Positions 56 and 99 each coordinate L-methionine. A flexible loop region spans residues 99–109; that stretch reads QSPDINQGVDR. Residues 164-166, 230-231, D239, 245-246, A262, and K266 contribute to the ATP site; these read DAK, RF, and RK. D239 serves as a coordination point for L-methionine. K270 provides a ligand contact to L-methionine.

This sequence belongs to the AdoMet synthase family. In terms of assembly, homotetramer; dimer of dimers. The cofactor is Mg(2+). K(+) is required as a cofactor.

The protein localises to the cytoplasm. It catalyses the reaction L-methionine + ATP + H2O = S-adenosyl-L-methionine + phosphate + diphosphate. It participates in amino-acid biosynthesis; S-adenosyl-L-methionine biosynthesis; S-adenosyl-L-methionine from L-methionine: step 1/1. In terms of biological role, catalyzes the formation of S-adenosylmethionine (AdoMet) from methionine and ATP. The overall synthetic reaction is composed of two sequential steps, AdoMet formation and the subsequent tripolyphosphate hydrolysis which occurs prior to release of AdoMet from the enzyme. This chain is S-adenosylmethionine synthase, found in Salmonella gallinarum (strain 287/91 / NCTC 13346).